We begin with the raw amino-acid sequence, 487 residues long: Inosine-5'-monophosphate dehydrogenase (487 aa).

CBS domains are found at residues 93–149 (IVSD…NKTV) and 153–214 (MTPK…CKDE). NAD(+)-binding positions include aspartate 248, 248–250 (DSS), and 298–300 (GIG). Residues glycine 300 and glycine 302 each contribute to the K(+) site. Serine 303 serves as a coordination point for IMP. Residue cysteine 305 participates in K(+) binding. Cysteine 305 functions as the Thioimidate intermediate in the catalytic mechanism. Residues 338-340 (DGG), 361-362 (GS), and 385-389 (YRGMG) each bind IMP. Arginine 401 (proton acceptor) is an active-site residue. Glutamate 415 contributes to the IMP binding site. K(+) contacts are provided by glutamate 469, serine 470, and histidine 471.

It belongs to the IMPDH/GMPR family. Homotetramer. The cofactor is K(+).

It catalyses the reaction IMP + NAD(+) + H2O = XMP + NADH + H(+). Its pathway is purine metabolism; XMP biosynthesis via de novo pathway; XMP from IMP: step 1/1. Mycophenolic acid (MPA) is a non-competitive inhibitor that prevents formation of the closed enzyme conformation by binding to the same site as the amobile flap. In contrast, mizoribine monophosphate (MZP) is a competitive inhibitor that induces the closed conformation. MPA is a potent inhibitor of mammalian IMPDHs but a poor inhibitor of the bacterial enzymes. MZP is a more potent inhibitor of bacterial IMPDH. Catalyzes the conversion of inosine 5'-phosphate (IMP) to xanthosine 5'-phosphate (XMP), the first committed and rate-limiting step in the de novo synthesis of guanine nucleotides, and therefore plays an important role in the regulation of cell growth. This Pasteurella multocida (strain Pm70) protein is Inosine-5'-monophosphate dehydrogenase.